Here is a 274-residue protein sequence, read N- to C-terminus: 2,3,4,5-tetrahydropyridine-2,6-dicarboxylate N-succinyltransferase (274 aa).

Arg-104 and Asp-141 together coordinate substrate.

This sequence belongs to the transferase hexapeptide repeat family. In terms of assembly, homotrimer.

The protein localises to the cytoplasm. The enzyme catalyses (S)-2,3,4,5-tetrahydrodipicolinate + succinyl-CoA + H2O = (S)-2-succinylamino-6-oxoheptanedioate + CoA. The protein operates within amino-acid biosynthesis; L-lysine biosynthesis via DAP pathway; LL-2,6-diaminopimelate from (S)-tetrahydrodipicolinate (succinylase route): step 1/3. This is 2,3,4,5-tetrahydropyridine-2,6-dicarboxylate N-succinyltransferase from Salmonella arizonae (strain ATCC BAA-731 / CDC346-86 / RSK2980).